A 426-amino-acid polypeptide reads, in one-letter code: Glutamate-1-semialdehyde 2,1-aminomutase (426 aa).

Residue Lys-265 is modified to N6-(pyridoxal phosphate)lysine.

It belongs to the class-III pyridoxal-phosphate-dependent aminotransferase family. HemL subfamily. Homodimer. It depends on pyridoxal 5'-phosphate as a cofactor.

Its subcellular location is the cytoplasm. The catalysed reaction is (S)-4-amino-5-oxopentanoate = 5-aminolevulinate. The protein operates within porphyrin-containing compound metabolism; protoporphyrin-IX biosynthesis; 5-aminolevulinate from L-glutamyl-tRNA(Glu): step 2/2. This is Glutamate-1-semialdehyde 2,1-aminomutase from Hahella chejuensis (strain KCTC 2396).